Reading from the N-terminus, the 433-residue chain is Enolase (433 aa).

Q163 provides a ligand contact to (2R)-2-phosphoglycerate. E205 (proton donor) is an active-site residue. Residues D242, E285, and D312 each coordinate Mg(2+). Positions 337, 366, 367, and 388 each coordinate (2R)-2-phosphoglycerate. The active-site Proton acceptor is the K337.

Belongs to the enolase family. It depends on Mg(2+) as a cofactor.

The protein resides in the cytoplasm. The protein localises to the secreted. It localises to the cell surface. The enzyme catalyses (2R)-2-phosphoglycerate = phosphoenolpyruvate + H2O. The protein operates within carbohydrate degradation; glycolysis; pyruvate from D-glyceraldehyde 3-phosphate: step 4/5. In terms of biological role, catalyzes the reversible conversion of 2-phosphoglycerate (2-PG) into phosphoenolpyruvate (PEP). It is essential for the degradation of carbohydrates via glycolysis. This chain is Enolase, found in Lawsonia intracellularis (strain PHE/MN1-00).